Consider the following 362-residue polypeptide: MADEQFPAAVTALEEYHNIEQQMAEPEVASNPDKMRKLGRRHAELGAIVSAYTAYKQVKDDLEAAREMASEDPDFAEEAKRLEGELPAAEEKLRTALIPRDPDDARDTIMEIKAGTGGEEAALFAGDLLRMYMRYAEKRGWSVTVQSENTTELGGVKDVQLAIRAKGTPAPEDGVWASLKYEGGVHRVQRIPVTESQGRIQTSAAGVIVFPEADEDDDEIEIDPKDLKIDIFMSSGPGGQSVNTTYSAVRMTHIPTGITVNMQDEKSQIQNRAAALRVLKSRLLAMKHEQEAAEAADMRHSQVRSLDRSERIRTYNFPENRIVDHRTNYKAYNLDAVLDGDLQAVIDSDIQADEADRLANQK.

Residue Gln-240 is modified to N5-methylglutamine.

It belongs to the prokaryotic/mitochondrial release factor family. Methylated by PrmC. Methylation increases the termination efficiency of RF1.

Its subcellular location is the cytoplasm. Peptide chain release factor 1 directs the termination of translation in response to the peptide chain termination codons UAG and UAA. This Bifidobacterium adolescentis (strain ATCC 15703 / DSM 20083 / NCTC 11814 / E194a) protein is Peptide chain release factor 1.